Reading from the N-terminus, the 58-residue chain is UPF0391 membrane protein MADE_1011595 (58 aa).

The next 2 membrane-spanning stretches (helical) occupy residues 4 to 24 and 27 to 47; these read WAIT…GGIA and ATGI…ISLI.

This sequence belongs to the UPF0391 family.

The protein localises to the cell membrane. This is UPF0391 membrane protein MADE_1011595 from Alteromonas mediterranea (strain DSM 17117 / CIP 110805 / LMG 28347 / Deep ecotype).